Reading from the N-terminus, the 176-residue chain is NADH-quinone oxidoreductase subunit I 2 (176 aa).

4Fe-4S ferredoxin-type domains lie at 45–77 (IVLT…MEAA) and 87–116 (RWFR…MTPD). Positions 57, 60, 63, 67, 96, 99, 102, and 106 each coordinate [4Fe-4S] cluster.

The protein belongs to the complex I 23 kDa subunit family. In terms of assembly, NDH-1 is composed of 14 different subunits. Subunits NuoA, H, J, K, L, M, N constitute the membrane sector of the complex. Requires [4Fe-4S] cluster as cofactor.

It localises to the cell inner membrane. It carries out the reaction a quinone + NADH + 5 H(+)(in) = a quinol + NAD(+) + 4 H(+)(out). NDH-1 shuttles electrons from NADH, via FMN and iron-sulfur (Fe-S) centers, to quinones in the respiratory chain. The immediate electron acceptor for the enzyme in this species is believed to be ubiquinone. Couples the redox reaction to proton translocation (for every two electrons transferred, four hydrogen ions are translocated across the cytoplasmic membrane), and thus conserves the redox energy in a proton gradient. The sequence is that of NADH-quinone oxidoreductase subunit I 2 from Geobacter sulfurreducens (strain ATCC 51573 / DSM 12127 / PCA).